A 106-amino-acid chain; its full sequence is MGNILNQIGIENYIFLSVVLFCIGVFGVLYRRNSIIVFMSIEIMLNAVNLLFVAFSTYHQDAQGQVFVFFSMAVAAAEVAVGLAILVSIFRNIGSISIDNLKNLKG.

A run of 3 helical transmembrane segments spans residues 8–28 (IGIE…VFGV), 35–55 (IIVF…FVAF), and 66–86 (VFVF…LAIL).

This sequence belongs to the complex I subunit 4L family. In terms of assembly, NDH-1 is composed of 14 different subunits. Subunits NuoA, H, J, K, L, M, N constitute the membrane sector of the complex.

The protein resides in the cell inner membrane. The enzyme catalyses a quinone + NADH + 5 H(+)(in) = a quinol + NAD(+) + 4 H(+)(out). NDH-1 shuttles electrons from NADH, via FMN and iron-sulfur (Fe-S) centers, to quinones in the respiratory chain. The immediate electron acceptor for the enzyme in this species is believed to be a menaquinone. Couples the redox reaction to proton translocation (for every two electrons transferred, four hydrogen ions are translocated across the cytoplasmic membrane), and thus conserves the redox energy in a proton gradient. This Flavobacterium johnsoniae (strain ATCC 17061 / DSM 2064 / JCM 8514 / BCRC 14874 / CCUG 350202 / NBRC 14942 / NCIMB 11054 / UW101) (Cytophaga johnsonae) protein is NADH-quinone oxidoreductase subunit K.